The following is a 165-amino-acid chain: MKTPRLPIAIQQAVMRRLRENLAQANLKLDRHYPEPKLVYTQRGTSAGTAWLESYEIRLNPVLLLENIDTFIAEVVPHELTHLLVWKHFGRKAPHGKEWKWMMESVLGVPARRTHQFALQSVRRNTFPYHCQCQQHQLTVRRHNRVVRGEAVYRCVHCGEPLVAG.

The 142-residue stretch at 22–163 (LAQANLKLDR…RCVHCGEPLV (142 aa)) folds into the SprT-like domain. His-78 is a binding site for Zn(2+). Glu-79 is a catalytic residue. A Zn(2+)-binding site is contributed by His-82.

This sequence belongs to the SprT family. Requires Zn(2+) as cofactor.

It localises to the cytoplasm. This is Protein SprT from Salmonella paratyphi A (strain ATCC 9150 / SARB42).